Here is a 321-residue protein sequence, read N- to C-terminus: Olfactory receptor 5K3 (321 aa).

Topologically, residues 1-25 (MNKENHSLIAEFILTGFTYHPKLKT) are extracellular. N-linked (GlcNAc...) asparagine glycosylation is present at Asn-5. A helical transmembrane segment spans residues 26 to 46 (VLFVVFFAIYLITMVGNIGLV). At 47–56 (ALIYIEQRLH) the chain is on the cytoplasmic side. A helical membrane pass occupies residues 57–77 (TPMYIFLGNLVLMDSCCSSAI). The Extracellular portion of the chain corresponds to 78–97 (TPKMLENFFSEDKRITLYEC). Cys-97 and Cys-179 are joined by a disulfide. A helical membrane pass occupies residues 98–118 (MAQFYFLCLAETTDCFLLAAM). The Cytoplasmic segment spans residues 119–143 (AYDCYVAICNPLQYHTMMSKTLCIQ). A helical membrane pass occupies residues 144–164 (MTAGAYLAGNLHPMIEVEFLL). Residues 165–196 (RLTFCGSHQINHFFCDVLPLYRLSCINPYINE) are Extracellular-facing. The chain crosses the membrane as a helical span at residues 197–217 (LVLFILAGSIQIFTIVLVSYF). Topologically, residues 218–235 (YILFTIFTMKSKEGRGKA) are cytoplasmic. The helical transmembrane segment at 236–256 (LSTCASHFLSVSIFCDSLLFM) threads the bilayer. The Extracellular portion of the chain corresponds to 257–269 (YARPGAVNEGDKD). A helical transmembrane segment spans residues 270–290 (IPVAIFYTLVIPLLNPFIYSL). At 291–321 (RNKEVINIMKKIMKKRKFCHILKQMSSPLAT) the chain is on the cytoplasmic side.

This sequence belongs to the G-protein coupled receptor 1 family.

The protein localises to the cell membrane. Functionally, odorant receptor. The sequence is that of Olfactory receptor 5K3 (OR5K3) from Homo sapiens (Human).